The chain runs to 1247 residues: DNA-directed RNA polymerase subunit beta (1247 aa).

This sequence belongs to the RNA polymerase beta chain family. As to quaternary structure, in plastids the minimal PEP RNA polymerase catalytic core is composed of four subunits: alpha, beta, beta', and beta''. When a (nuclear-encoded) sigma factor is associated with the core the holoenzyme is formed, which can initiate transcription.

Its subcellular location is the plastid. The enzyme catalyses RNA(n) + a ribonucleoside 5'-triphosphate = RNA(n+1) + diphosphate. Its function is as follows. DNA-dependent RNA polymerase catalyzes the transcription of DNA into RNA using the four ribonucleoside triphosphates as substrates. This chain is DNA-directed RNA polymerase subunit beta (rpoB), found in Helicosporidium sp. subsp. Simulium jonesii (Green alga).